Here is a 506-residue protein sequence, read N- to C-terminus: Probable cytosol aminopeptidase (506 aa).

Residues Lys-278 and Asp-283 each coordinate Mn(2+). Residue Lys-290 is part of the active site. 3 residues coordinate Mn(2+): Asp-301, Asp-360, and Glu-362. Arg-364 is an active-site residue.

Belongs to the peptidase M17 family. It depends on Mn(2+) as a cofactor.

The protein localises to the cytoplasm. It carries out the reaction Release of an N-terminal amino acid, Xaa-|-Yaa-, in which Xaa is preferably Leu, but may be other amino acids including Pro although not Arg or Lys, and Yaa may be Pro. Amino acid amides and methyl esters are also readily hydrolyzed, but rates on arylamides are exceedingly low.. The catalysed reaction is Release of an N-terminal amino acid, preferentially leucine, but not glutamic or aspartic acids.. Functionally, presumably involved in the processing and regular turnover of intracellular proteins. Catalyzes the removal of unsubstituted N-terminal amino acids from various peptides. The sequence is that of Probable cytosol aminopeptidase from Ralstonia nicotianae (strain ATCC BAA-1114 / GMI1000) (Ralstonia solanacearum).